A 639-amino-acid polypeptide reads, in one-letter code: UvrABC system protein C (639 aa).

The GIY-YIG domain maps to 20 to 97 (ERSGVYRMFD…IKKFQPKFNI (78 aa)). The 36-residue stretch at 207-242 (KELQENLSRKMEELSSQMRFEEAAEIRDRIKALSYV) folds into the UVR domain.

Belongs to the UvrC family. In terms of assembly, interacts with UvrB in an incision complex.

The protein resides in the cytoplasm. In terms of biological role, the UvrABC repair system catalyzes the recognition and processing of DNA lesions. UvrC both incises the 5' and 3' sides of the lesion. The N-terminal half is responsible for the 3' incision and the C-terminal half is responsible for the 5' incision. The chain is UvrABC system protein C from Rickettsia conorii (strain ATCC VR-613 / Malish 7).